The sequence spans 247 residues: 3-deoxy-manno-octulosonate cytidylyltransferase (247 aa).

Belongs to the KdsB family.

The protein localises to the cytoplasm. The enzyme catalyses 3-deoxy-alpha-D-manno-oct-2-ulosonate + CTP = CMP-3-deoxy-beta-D-manno-octulosonate + diphosphate. The protein operates within nucleotide-sugar biosynthesis; CMP-3-deoxy-D-manno-octulosonate biosynthesis; CMP-3-deoxy-D-manno-octulosonate from 3-deoxy-D-manno-octulosonate and CTP: step 1/1. It functions in the pathway bacterial outer membrane biogenesis; lipopolysaccharide biosynthesis. Activates KDO (a required 8-carbon sugar) for incorporation into bacterial lipopolysaccharide in Gram-negative bacteria. The sequence is that of 3-deoxy-manno-octulosonate cytidylyltransferase from Methylorubrum extorquens (strain CM4 / NCIMB 13688) (Methylobacterium extorquens).